Here is an 800-residue protein sequence, read N- to C-terminus: General transcription and DNA repair factor IIH helicase/translocase subunit XPB (800 aa).

The interval 1 to 27 (MSSGDSNLKRRRGGNTGQSSKSYNTWT) is disordered. Over residues 17–27 (GQSSKSYNTWT) the composition is skewed to polar residues. Residues 329–491 (MFGNGRARSG…DLNFLIGPKL (163 aa)) form the Helicase ATP-binding domain. 342 to 349 (LPCGAGKS) contacts ATP. Residues 444 to 447 (DEVH) carry the DEVH box motif. One can recognise a Helicase C-terminal domain in the interval 546–704 (RACEYLIRFH…ELPGIDQEVN (159 aa)). A disordered region spans residues 743–769 (GAKKSKSSAPTVSRTTGGSTRALSGGN). Residues 749 to 764 (SSAPTVSRTTGGSTRA) are compositionally biased toward polar residues.

It belongs to the helicase family. RAD25/XPB subfamily. Component of the 7-subunit TFIIH core complex composed of XPB/repB, XPD/repD, gtf2h1, gtf2h2, gtf2h3, gtf2h4 and gtf2h5, which is active in NER. The core complex associates with the 3-subunit CDK-activating kinase (CAK) module composed of cycH/cyclin H, cdk7 and mnat1 to form the 10-subunit holoenzyme (holo-TFIIH) active in transcription.

Its subcellular location is the nucleus. It carries out the reaction Couples ATP hydrolysis with the unwinding of duplex DNA by translocating in the 3'-5' direction.. The catalysed reaction is ATP + H2O = ADP + phosphate + H(+). In terms of biological role, ATP-dependent 3'-5' DNA helicase/translocase; binds dsDNA rather than ssDNA, unzipping it in a translocase rather than classical helicase activity. Component of the general transcription and DNA repair factor IIH (TFIIH) core complex. When complexed to CDK-activating kinase (CAK), involved in RNA transcription by RNA polymerase II. The ATPase activity of XPB/ERCC3, but not its helicase activity, is required for DNA opening; it may wrap around the damaged DNA wedging it open, causing localized melting and twisting that allows XPD/ERCC2 helicase to anchor. The ATP-dependent helicase activity of XPB/ERCC3 may be required for promoter escape. Also involved in transcription-coupled nucleotide excision repair (NER) of damaged DNA. In NER, TFIIH acts by opening DNA around the lesion to allow the excision of the damaged oligonucleotide and its replacement by a new DNA fragment. The structure of the TFIIH transcription complex differs from the NER-TFIIH complex. This chain is General transcription and DNA repair factor IIH helicase/translocase subunit XPB, found in Dictyostelium discoideum (Social amoeba).